We begin with the raw amino-acid sequence, 154 residues long: Spore-associated protein A (154 aa).

Positions 1–33 are cleaved as a signal peptide; that stretch reads MQAVGATLTAVGAIGAGLLVTAPAAGAATAGAT.

Its subcellular location is the spore wall. This is Spore-associated protein A from Streptomyces coelicolor (strain ATCC BAA-471 / A3(2) / M145).